Reading from the N-terminus, the 213-residue chain is MKFLIIVLCLSLVNGYGIKRNVQEHDLKDPHEHPTMTWEILERFVGNTLYITTPQVLSLPLGAEVRCDDIEGFSCSWPGYKDYAHDHIDFHFNPSNPFYSFVDTFYVSLGDRVDKIYLRVISATSREKMLNVGCHTSFSVNLPIGIQIYHDKDMKLLVEGRHLECAHRVYFVKYCPYHAHGYCFDDKLKVYDLKRIKSRKAFEKVSQHQKSEL.

The N-terminal stretch at 1–15 (MKFLIIVLCLSLVNG) is a signal peptide.

The chain is Non-structural protein 7b from Canine coronavirus (strain BGF10) (CCoV).